A 991-amino-acid chain; its full sequence is Integrator complex subunit 10-like protein (991 aa).

Disordered regions lie at residues 180 to 217, 310 to 345, 462 to 484, 549 to 614, and 961 to 991; these read NNNNNNNNNNNNNNNNKNNSNNNNKNNNNNNDDSNNNN, YFDEDDYDQKQQQQQQQQQQQQEQKGSKEDEEDIEK, NDYFDRNSEGNGGDENDENSQES, NSSS…GQQP, and EKQYSSSNTANNSGVNNSPIHNQNTDVEMNE. Over residues 319–333 the composition is skewed to low complexity; that stretch reads KQQQQQQQQQQQQEQ. Residues 473–484 show a composition bias toward acidic residues; that stretch reads GGDENDENSQES. The span at 549–609 shows a compositional bias: low complexity; that stretch reads NSSSGSNGII…NNNNNNNNNN (61 aa). The segment covering 964-991 has biased composition (polar residues); sequence YSSSNTANNSGVNNSPIHNQNTDVEMNE.

It is found in the nucleus. Functionally, may be a component of the Integrator complex, a complex involved in the small nuclear RNAs (snRNA) U1 and U2 transcription and in their 3'-box-dependent processing. This Dictyostelium discoideum (Social amoeba) protein is Integrator complex subunit 10-like protein.